Reading from the N-terminus, the 188-residue chain is Peptidyl-tRNA hydrolase (188 aa).

Y14 is a tRNA binding site. H19 acts as the Proton acceptor in catalysis. 3 residues coordinate tRNA: Y64, N66, and N112.

This sequence belongs to the PTH family. As to quaternary structure, monomer.

It localises to the cytoplasm. The enzyme catalyses an N-acyl-L-alpha-aminoacyl-tRNA + H2O = an N-acyl-L-amino acid + a tRNA + H(+). Its function is as follows. Hydrolyzes ribosome-free peptidyl-tRNAs (with 1 or more amino acids incorporated), which drop off the ribosome during protein synthesis, or as a result of ribosome stalling. Functionally, catalyzes the release of premature peptidyl moieties from peptidyl-tRNA molecules trapped in stalled 50S ribosomal subunits, and thus maintains levels of free tRNAs and 50S ribosomes. This Clostridium tetani (strain Massachusetts / E88) protein is Peptidyl-tRNA hydrolase.